The following is a 334-amino-acid chain: Probable fructose-bisphosphate aldolase class 1 (334 aa).

The protein belongs to the class I fructose-bisphosphate aldolase family.

It catalyses the reaction beta-D-fructose 1,6-bisphosphate = D-glyceraldehyde 3-phosphate + dihydroxyacetone phosphate. Its pathway is carbohydrate degradation; glycolysis; D-glyceraldehyde 3-phosphate and glycerone phosphate from D-glucose: step 4/4. This is Probable fructose-bisphosphate aldolase class 1 from Xanthomonas campestris pv. campestris (strain ATCC 33913 / DSM 3586 / NCPPB 528 / LMG 568 / P 25).